Consider the following 431-residue polypeptide: 5-methylthioadenosine/S-adenosylhomocysteine deaminase (431 aa).

Zn(2+) contacts are provided by H66 and H68. Positions 95, 147, and 185 each coordinate substrate. H212 contacts Zn(2+). The substrate site is built by E215 and D300. D300 contributes to the Zn(2+) binding site.

The protein belongs to the metallo-dependent hydrolases superfamily. MTA/SAH deaminase family. It depends on Zn(2+) as a cofactor.

The enzyme catalyses S-adenosyl-L-homocysteine + H2O + H(+) = S-inosyl-L-homocysteine + NH4(+). It catalyses the reaction S-methyl-5'-thioadenosine + H2O + H(+) = S-methyl-5'-thioinosine + NH4(+). Its function is as follows. Catalyzes the deamination of 5-methylthioadenosine and S-adenosyl-L-homocysteine into 5-methylthioinosine and S-inosyl-L-homocysteine, respectively. Is also able to deaminate adenosine. The chain is 5-methylthioadenosine/S-adenosylhomocysteine deaminase from Acetivibrio thermocellus (strain ATCC 27405 / DSM 1237 / JCM 9322 / NBRC 103400 / NCIMB 10682 / NRRL B-4536 / VPI 7372) (Clostridium thermocellum).